Here is a 297-residue protein sequence, read N- to C-terminus: Ribosomal RNA small subunit methyltransferase H (297 aa).

S-adenosyl-L-methionine contacts are provided by residues 34–36, Asp-54, Phe-88, Asp-106, and Gln-113; that span reads AGH. Positions 272–297 are disordered; the sequence is PLTAGEEETDRNPRARSAKLRAAEKK.

The protein belongs to the methyltransferase superfamily. RsmH family.

The protein resides in the cytoplasm. It catalyses the reaction cytidine(1402) in 16S rRNA + S-adenosyl-L-methionine = N(4)-methylcytidine(1402) in 16S rRNA + S-adenosyl-L-homocysteine + H(+). Functionally, specifically methylates the N4 position of cytidine in position 1402 (C1402) of 16S rRNA. The sequence is that of Ribosomal RNA small subunit methyltransferase H from Acidobacterium capsulatum (strain ATCC 51196 / DSM 11244 / BCRC 80197 / JCM 7670 / NBRC 15755 / NCIMB 13165 / 161).